The chain runs to 505 residues: Alpha-ketoglutarate-dependent dioxygenase FTO (505 aa).

Thr4 is modified (phosphothreonine). Residues 32–327 (TPKDDEFYQQ…SSTHRVAECS (296 aa)) are fe2OG dioxygenase domain. Residues Arg96 and Tyr108 each contribute to the substrate site. A 2-oxoglutarate-binding site is contributed by Asn205. A loop L1; predicted to block binding of double-stranded DNA or RNA region spans residues 213–224 (PYLKEEPYFGMG). Lys216 carries the N6-acetyllysine modification. Fe cation contacts are provided by His231 and Asp233. 231–234 (HHDE) lines the substrate pocket. Residue Tyr295 participates in 2-oxoglutarate binding. His307 lines the Fe cation pocket. 2-oxoglutarate contacts are provided by residues 316 to 318 (RFS), Thr320, and Arg322.

Belongs to the fto family. As to quaternary structure, monomer. May also exist as homodimer. The cofactor is Fe(2+).

The protein localises to the nucleus. The protein resides in the nucleus speckle. It localises to the cytoplasm. It catalyses the reaction a 5'-end (N(7)-methyl 5'-triphosphoguanosine)-(N(6),2'-O-dimethyladenosine) in mRNA + 2-oxoglutarate + O2 = a 5'-end (N(7)-methyl 5'-triphosphoguanosine)-(2'-O-methyladenosine) in mRNA + formaldehyde + succinate + CO2. The enzyme catalyses an N(6)-methyladenosine in mRNA + 2-oxoglutarate + O2 = an adenosine in mRNA + formaldehyde + succinate + CO2. It carries out the reaction N(6)-methyladenosine in U6 snRNA + 2-oxoglutarate + O2 = adenosine in U6 snRNA + formaldehyde + succinate + CO2. The catalysed reaction is a 5'-end (N(7)-methyl 5'-triphosphoguanosine)-(N(6),2'-O-dimethyladenosine) in U6 snRNA + 2-oxoglutarate + O2 = a 5'-end (N(7)-methyl 5'-triphosphoguanosine)-(2'-O-methyladenosine) in U6 snRNA + formaldehyde + succinate + CO2. It catalyses the reaction an N(1)-methyladenosine in tRNA + 2-oxoglutarate + O2 = an adenosine in tRNA + formaldehyde + succinate + CO2. Activated by ascorbate. Inhibited by N-oxalylglycine, fumarate and succinate. RNA demethylase that mediates oxidative demethylation of different RNA species, such as mRNAs, tRNAs and snRNAs, and acts as a regulator of fat mass, adipogenesis and energy homeostasis. Specifically demethylates N(6)-methyladenosine (m6A) RNA, the most prevalent internal modification of messenger RNA (mRNA) in higher eukaryotes. M6A demethylation by FTO affects mRNA expression and stability. Also able to demethylate m6A in U6 small nuclear RNA (snRNA). Mediates demethylation of N(6),2'-O-dimethyladenosine cap (m6A(m)), by demethylating the N(6)-methyladenosine at the second transcribed position of mRNAs and U6 snRNA. Demethylation of m6A(m) in the 5'-cap by FTO affects mRNA stability by promoting susceptibility to decapping. Also acts as a tRNA demethylase by removing N(1)-methyladenine from various tRNAs. Has no activity towards 1-methylguanine. Has no detectable activity towards double-stranded DNA. Also able to repair alkylated DNA and RNA by oxidative demethylation: demethylates single-stranded RNA containing 3-methyluracil, single-stranded DNA containing 3-methylthymine and has low demethylase activity towards single-stranded DNA containing 1-methyladenine or 3-methylcytosine. Ability to repair alkylated DNA and RNA is however unsure in vivo. Involved in the regulation of fat mass, adipogenesis and body weight, thereby contributing to the regulation of body size and body fat accumulation. Involved in the regulation of thermogenesis and the control of adipocyte differentiation into brown or white fat cells. Regulates activity of the dopaminergic midbrain circuitry via its ability to demethylate m6A in mRNAs. The sequence is that of Alpha-ketoglutarate-dependent dioxygenase FTO from Pongo abelii (Sumatran orangutan).